A 239-amino-acid polypeptide reads, in one-letter code: Uracil-DNA glycosylase (239 aa).

The Proton acceptor role is filled by Asp-65.

This sequence belongs to the uracil-DNA glycosylase (UDG) superfamily. UNG family.

It localises to the cytoplasm. It carries out the reaction Hydrolyzes single-stranded DNA or mismatched double-stranded DNA and polynucleotides, releasing free uracil.. In terms of biological role, excises uracil residues from the DNA which can arise as a result of misincorporation of dUMP residues by DNA polymerase or due to deamination of cytosine. The polypeptide is Uracil-DNA glycosylase (Levilactobacillus brevis (strain ATCC 367 / BCRC 12310 / CIP 105137 / JCM 1170 / LMG 11437 / NCIMB 947 / NCTC 947) (Lactobacillus brevis)).